Reading from the N-terminus, the 113-residue chain is UPF0122 protein Lreu_1156 (113 aa).

Belongs to the UPF0122 family.

Its function is as follows. Might take part in the signal recognition particle (SRP) pathway. This is inferred from the conservation of its genetic proximity to ftsY/ffh. May be a regulatory protein. The chain is UPF0122 protein Lreu_1156 from Limosilactobacillus reuteri (strain DSM 20016) (Lactobacillus reuteri).